Here is a 461-residue protein sequence, read N- to C-terminus: Putative forkhead-related transcription factor fkh-5 (461 aa).

Positions 171–262 (QRPQLSYQLL…VEKEMIDVKT (92 aa)) form a DNA-binding region, fork-head.

The protein localises to the nucleus. In terms of biological role, transcription factor. Binds to DNA sequence motif 5'-CTGTTTCA-3'. Regulates expression of a class of small RNAs, known as 21U-RNAs, perhaps acting redundantly with fkh-4 and fkh-3. This chain is Putative forkhead-related transcription factor fkh-5 (fkh-5), found in Caenorhabditis elegans.